We begin with the raw amino-acid sequence, 373 residues long: UBX domain-containing protein 1 (373 aa).

Disordered stretches follow at residues 39–179 (VTEF…QIPR) and 236–293 (IKQH…VDES). Positions 49–59 (TAGSSEPTGQP) are enriched in polar residues. Composition is skewed to low complexity over residues 60–71 (SAKSSSSTPRES) and 85–94 (LGDLASGAAD). Residues 95–104 (SSDDDDDENQ) show a composition bias toward acidic residues. The segment covering 121-132 (DDLKKKIIEKAR) has biased composition (basic and acidic residues). The 74-residue stretch at 185 to 258 (LHFWADGFSV…KYQPFAGKGQ (74 aa)) folds into the SEP domain. The region spanning 292–369 (ESQPVVTLQI…PEFKRGGVVV (78 aa)) is the UBX domain.

Involved in CDC48-dependent protein degradation through the ubiquitin/proteasome pathway. In Emericella nidulans (strain FGSC A4 / ATCC 38163 / CBS 112.46 / NRRL 194 / M139) (Aspergillus nidulans), this protein is UBX domain-containing protein 1 (ubx1).